A 235-amino-acid chain; its full sequence is Ribonuclease PH (235 aa).

Residues arginine 86 and 124 to 126 (GTR) contribute to the phosphate site.

This sequence belongs to the RNase PH family. In terms of assembly, homohexameric ring arranged as a trimer of dimers.

The catalysed reaction is tRNA(n+1) + phosphate = tRNA(n) + a ribonucleoside 5'-diphosphate. Functionally, phosphorolytic 3'-5' exoribonuclease that plays an important role in tRNA 3'-end maturation. Removes nucleotide residues following the 3'-CCA terminus of tRNAs; can also add nucleotides to the ends of RNA molecules by using nucleoside diphosphates as substrates, but this may not be physiologically important. Probably plays a role in initiation of 16S rRNA degradation (leading to ribosome degradation) during starvation. The polypeptide is Ribonuclease PH (Francisella tularensis subsp. holarctica (strain FTNF002-00 / FTA)).